Consider the following 229-residue polypeptide: 1-(5-phosphoribosyl)-5-[(5-phosphoribosylamino)methylideneamino] imidazole-4-carboxamide isomerase (229 aa).

Catalysis depends on Asp8, which acts as the Proton acceptor. Asp125 serves as the catalytic Proton donor.

It belongs to the HisA/HisF family.

Its subcellular location is the cytoplasm. The enzyme catalyses 1-(5-phospho-beta-D-ribosyl)-5-[(5-phospho-beta-D-ribosylamino)methylideneamino]imidazole-4-carboxamide = 5-[(5-phospho-1-deoxy-D-ribulos-1-ylimino)methylamino]-1-(5-phospho-beta-D-ribosyl)imidazole-4-carboxamide. Its pathway is amino-acid biosynthesis; L-histidine biosynthesis; L-histidine from 5-phospho-alpha-D-ribose 1-diphosphate: step 4/9. The sequence is that of 1-(5-phosphoribosyl)-5-[(5-phosphoribosylamino)methylideneamino] imidazole-4-carboxamide isomerase from Thermococcus onnurineus (strain NA1).